The chain runs to 356 residues: Protein ATP1B4 (356 aa).

The Nuclear portion of the chain corresponds to 1–109 (MRRQLRSRRA…SLARTGQSRS (109 aa)). A disordered region spans residues 32 to 77 (LADEEEEAEEEAQVMMVPGLEEEEEEEEGKEEEEEREEEEGQGQST). Acidic residues-rich tracts occupy residues 33–43 (ADEEEEAEEEA) and 51–72 (LEEEEEEEEGKEEEEEREEEEG). The helical; Signal-anchor for type II membrane protein transmembrane segment at 110-130 (LILVIYFFFYASLAAVITLFI) threads the bilayer. Topologically, residues 131 to 356 (YMLFLAISPY…RIIFTLNIET (226 aa)) are perinuclear space.

The protein belongs to the X(+)/potassium ATPases subunit beta family. As to quaternary structure, does not associate with known Na,K-ATPase alpha-subunits. Associates with a SMAD7-transcriptional complex. Interacts with SNW1 and TOR1AIP1. In terms of tissue distribution, expressed in perinatal myocytes (at protein level). Expressed during postnatal development in skeletal muscle and heart.

It is found in the nucleus inner membrane. Functionally, may act as a transcriptional coregulator during muscle development through its interaction with SNW1. Has lost its ancestral function as a Na,K-ATPase beta-subunit. The sequence is that of Protein ATP1B4 (Atp1b4) from Rattus norvegicus (Rat).